A 188-amino-acid polypeptide reads, in one-letter code: MTLDNLTHHFLIAAPSMPDERFAQSLVYICRHDRHGVLGLVVNRPIFDTQVGHLLDNLDIEVTDTSVMYDTPLDGGPVYPEVGFVLHTGQPTWASSFPISENVCITTSKDILQNIAAGSAGIGHYHLCLGHASWHEGQLEKEISQGDWLVSPGDLSLLFEIPFEERWRHAAEKIGVHLDFLSDEVGRA.

It belongs to the UPF0301 (AlgH) family.

The chain is UPF0301 protein PsycPRwf_0144 from Psychrobacter sp. (strain PRwf-1).